We begin with the raw amino-acid sequence, 1032 residues long: MTDTTDDIAEEISFQSFEDDCKLLGSLFHDVLQREVGNPFMEKVERIRILAQSALNLRMAGIEDTANLLEKQLTSEISKMPLEEALTLARTFTHSLNLMGIADTHHRMHKVHNVTQLARSCDDIFSQLLQSGISPDELYKTVCKQEVEIVLTAHPTQINRRTLQYKHIRIAHLLEYNTRSDLSVEDRETLIEDLVREITSLWQTDELRRQKPTPVDEARAGLNIVEQSLWKAVPQYLRRVSNSLKKFTGKPLPLTCTPMKFGSWMGGDRDGNPNVTAKVTKEVSLLSRWMAIDLYIREVDSLRFELSTDRCSDRFSRLADKILEKDYDRGKSNFQKQQSSSCLPTQLPARAHLPACIDFGESRHTKFEIATTDYMPPNLQKQNEQDFSESDWEKIDNGSRSGLTSRGSFSSTSQLLLQRKLFEESQVGKTSFQKLLEPPPLKRAGSAPYRIVLGEVKEKLVKTRRLLELLIEGLPCEYDPKNSYETSDQLLEPLLLCYESLQSSGARVLADGRLADLIRRVSTFGMVLVKLDLRQEAARHSEALDAITTYLDMGTYSEWDEEKKLEFLTRELKGKRPLVPQCIKVGPDVKEVLDTFRVAAELGSESLGAYVISMASNASDVLAVELLQKDARLALTSEHGKPCPGGTLRVVPLFETVNDLRAAGPSIRKLLSIDWYREHIQKNHNGHQEVMVGYSDSGKDAGRFTAAWELYKAQENVVAACNEFGIKITLFHGRGGSIGRGGGPTYLAIQSQPPGSVMGSLRSTEQGEMVQAKFGIPQTAVRQLEVYTTAVLLATLKPPQPPREEKWRNLMEEISGISCQHYRSTVYENPEFLSYFHEATPQAELGFLNIGSRPTRRKSSSGIGHLRAIPWVFAWTQTRFVLPAWLGVGAGLKGVSEKGHADDLKEMYKEWPFFQSTLELIEMVLAKADIPMTKHYDEQLVSEKRRGLGTELRKELMTTEKYVLVISGHEKLLQDNKSLKKLIDSRLPYLNAMNMLQVEILKRLRRDEDNNKLRDALLITINGIAAGMRNTG.

The active site involves H154. Residues P377 to G407 are disordered. Polar residues predominate over residues G398 to G407. Residue K699 is part of the active site.

It belongs to the PEPCase type 1 family. Homotetramer. Requires Mg(2+) as cofactor. Expressed at low levels in flowers and siliques, and detectable in roots.

It localises to the cytoplasm. It carries out the reaction oxaloacetate + phosphate = phosphoenolpyruvate + hydrogencarbonate. Functionally, through the carboxylation of phosphoenolpyruvate (PEP) it forms oxaloacetate, a four-carbon dicarboxylic acid source for the tricarboxylic acid cycle. The chain is Phosphoenolpyruvate carboxylase 4 (PPC4) from Arabidopsis thaliana (Mouse-ear cress).